A 138-amino-acid polypeptide reads, in one-letter code: Acidic phospholipase A2 Cvv-E6e (138 aa).

An N-terminal signal peptide occupies residues 1–16; sequence MRTLWILAVLLLGVEG. Cystine bridges form between cysteine 42–cysteine 131, cysteine 44–cysteine 60, cysteine 59–cysteine 111, cysteine 65–cysteine 138, cysteine 66–cysteine 104, cysteine 73–cysteine 97, and cysteine 91–cysteine 102. Tyrosine 43, glycine 45, and glycine 47 together coordinate Ca(2+). The active site involves histidine 63. Aspartate 64 lines the Ca(2+) pocket. Aspartate 105 is an active-site residue.

Requires Ca(2+) as cofactor. In terms of tissue distribution, expressed by the venom gland.

It localises to the secreted. The enzyme catalyses a 1,2-diacyl-sn-glycero-3-phosphocholine + H2O = a 1-acyl-sn-glycero-3-phosphocholine + a fatty acid + H(+). Functionally, snake venom phospholipase A2 (PLA2) that significantly inhibits ADP-induced platelet aggregation in platelet-rich plasma of human, rabbit and guinea pig. PLA2 catalyzes the calcium-dependent hydrolysis of the 2-acyl groups in 3-sn-phosphoglycerides. This is Acidic phospholipase A2 Cvv-E6e from Crotalus viridis viridis (Prairie rattlesnake).